Here is a 481-residue protein sequence, read N- to C-terminus: PTS system N-acetylmuramic acid-specific EIIBC component (481 aa).

Residues 1–89 (MAKITQTMMA…NALIESGDNV (89 aa)) form the PTS EIIB type-1 domain. Residue Cys28 is the Phosphocysteine intermediate; for EIIB activity of the active site. Residues 122 to 481 (SKFATIFTPL…FFGCKDVDLS (360 aa)) enclose the PTS EIIC type-1 domain. The next 10 helical transmembrane spans lie at 124-144 (FATIFTPLIPGFIAAGLLLGI), 165-185 (LVAYLKVFGKGLFAFLSILIG), 190-210 (QAFGGSGVNGAILASLFVLGY), 225-245 (FFGFAIDPRGNIIGVLLAAIL), 263-283 (MILTSVVTLLIMGAVTFLIIM), 307-327 (AAILAGLFLISVVFGIHQGFV), 342-362 (LFPILAMAGAGQVGASLALYA), 376-396 (GAIIPGILGIGEPLIYGVTLP), 406-426 (IGGAAGGFFIGLISYLGLPVG), and 448-468 (IFAGMAVFVGGLLISYTVGFA).

The protein localises to the cell inner membrane. It catalyses the reaction N-acetyl-beta-D-muramate(out) + N(pros)-phospho-L-histidyl-[protein] = N-acetyl-beta-D-muramate 6-phosphate(in) + L-histidyl-[protein]. Its function is as follows. The phosphoenolpyruvate-dependent sugar phosphotransferase system (sugar PTS), a major carbohydrate active transport system, catalyzes the phosphorylation of incoming sugar substrates concomitantly with their translocation across the cell membrane. This system is involved in N-acetylmuramic acid (MurNAc) transport, yielding cytoplasmic MurNAc-6-P. Is also able to take up anhydro-N-acetylmuramic acid (anhMurNAc), but cannot phosphorylate the carbon 6, probably because of the 1,6-anhydro ring. This Vibrio cholerae serotype O1 (strain ATCC 39315 / El Tor Inaba N16961) protein is PTS system N-acetylmuramic acid-specific EIIBC component (murP).